A 204-amino-acid chain; its full sequence is Urease accessory protein UreG (204 aa).

11–18 (GPVGAGKT) is a binding site for GTP.

The protein belongs to the SIMIBI class G3E GTPase family. UreG subfamily. In terms of assembly, homodimer. UreD, UreF and UreG form a complex that acts as a GTP-hydrolysis-dependent molecular chaperone, activating the urease apoprotein by helping to assemble the nickel containing metallocenter of UreC. The UreE protein probably delivers the nickel.

The protein resides in the cytoplasm. In terms of biological role, facilitates the functional incorporation of the urease nickel metallocenter. This process requires GTP hydrolysis, probably effectuated by UreG. In Staphylococcus aureus (strain MSSA476), this protein is Urease accessory protein UreG.